A 285-amino-acid chain; its full sequence is Pantothenate synthetase (285 aa).

30 to 37 (MGFLHEGH) is an ATP binding site. His37 (proton donor) is an active-site residue. Position 61 (Gln61) interacts with (R)-pantoate. Residue Gln61 participates in beta-alanine binding. 147 to 150 (GQKD) lines the ATP pocket. Position 153 (Gln153) interacts with (R)-pantoate. ATP is bound by residues Val176 and 184–187 (KSSR).

The protein belongs to the pantothenate synthetase family. As to quaternary structure, homodimer.

It is found in the cytoplasm. It carries out the reaction (R)-pantoate + beta-alanine + ATP = (R)-pantothenate + AMP + diphosphate + H(+). It participates in cofactor biosynthesis; (R)-pantothenate biosynthesis; (R)-pantothenate from (R)-pantoate and beta-alanine: step 1/1. In terms of biological role, catalyzes the condensation of pantoate with beta-alanine in an ATP-dependent reaction via a pantoyl-adenylate intermediate. The sequence is that of Pantothenate synthetase from Listeria welshimeri serovar 6b (strain ATCC 35897 / DSM 20650 / CCUG 15529 / CIP 8149 / NCTC 11857 / SLCC 5334 / V8).